The primary structure comprises 208 residues: MKKRFSAKLFSALVLSISFFSAANAASPKDELNKRLAMNEGFSADFSQQVISPEGETVMEGEGTVEIARPSLFRWSTTFPDENLLVSDGKTLWYYSPFIEQVSIYWQEQATEQTPFVLLTRNRASDWDNYKISQKGNEFTLIPTAVDSTQGQFQINIDAKGVVKGFNVIEQDGQKGLFTFSNVKLGKPKADRFTFTVPKGVEVDDQRN.

The first 25 residues, 1 to 25 (MKKRFSAKLFSALVLSISFFSAANA), serve as a signal peptide directing secretion.

This sequence belongs to the LolA family. Monomer.

The protein localises to the periplasm. Its function is as follows. Participates in the translocation of lipoproteins from the inner membrane to the outer membrane. Only forms a complex with a lipoprotein if the residue after the N-terminal Cys is not an aspartate (The Asp acts as a targeting signal to indicate that the lipoprotein should stay in the inner membrane). The sequence is that of Outer-membrane lipoprotein carrier protein from Vibrio parahaemolyticus serotype O3:K6 (strain RIMD 2210633).